We begin with the raw amino-acid sequence, 34 residues long: Conotoxin Cl6d (34 aa).

Cystine bridges form between cysteine 4-cysteine 19, cysteine 12-cysteine 29, and cysteine 18-cysteine 33. Residues proline 14 and proline 21 each carry the 4-hydroxyproline modification.

As to expression, expressed by the venom duct.

Its subcellular location is the secreted. In Californiconus californicus (California cone), this protein is Conotoxin Cl6d.